The chain runs to 432 residues: Glutamate-1-semialdehyde 2,1-aminomutase (432 aa).

At Lys-267 the chain carries N6-(pyridoxal phosphate)lysine.

Belongs to the class-III pyridoxal-phosphate-dependent aminotransferase family. HemL subfamily. In terms of assembly, homodimer. Requires pyridoxal 5'-phosphate as cofactor.

The protein localises to the cytoplasm. It catalyses the reaction (S)-4-amino-5-oxopentanoate = 5-aminolevulinate. The protein operates within porphyrin-containing compound metabolism; protoporphyrin-IX biosynthesis; 5-aminolevulinate from L-glutamyl-tRNA(Glu): step 2/2. The chain is Glutamate-1-semialdehyde 2,1-aminomutase from Rhodococcus erythropolis (strain PR4 / NBRC 100887).